Reading from the N-terminus, the 356-residue chain is Glycerol-1-phosphate dehydrogenase [NAD(P)+] (356 aa).

NAD(+)-binding positions include 103 to 107 and 125 to 128; these read GRSID and TAAS. Aspartate 130 contacts substrate. Serine 134 lines the NAD(+) pocket. Aspartate 177 lines the substrate pocket. Aspartate 177 and histidine 257 together coordinate Zn(2+). Histidine 261 provides a ligand contact to substrate. Histidine 273 contributes to the Zn(2+) binding site.

Belongs to the glycerol-1-phosphate dehydrogenase family. Requires Zn(2+) as cofactor.

Its subcellular location is the cytoplasm. The catalysed reaction is sn-glycerol 1-phosphate + NAD(+) = dihydroxyacetone phosphate + NADH + H(+). It carries out the reaction sn-glycerol 1-phosphate + NADP(+) = dihydroxyacetone phosphate + NADPH + H(+). It participates in membrane lipid metabolism; glycerophospholipid metabolism. Functionally, catalyzes the NAD(P)H-dependent reduction of dihydroxyacetonephosphate (DHAP or glycerone phosphate) to glycerol 1-phosphate (G1P). The G1P thus generated is used as the glycerophosphate backbone of phospholipids in the cellular membranes of Archaea. The polypeptide is Glycerol-1-phosphate dehydrogenase [NAD(P)+] (Methanosarcina acetivorans (strain ATCC 35395 / DSM 2834 / JCM 12185 / C2A)).